A 106-amino-acid polypeptide reads, in one-letter code: Large ribosomal subunit protein eL42 (106 aa).

This sequence belongs to the eukaryotic ribosomal protein eL42 family.

The sequence is that of Large ribosomal subunit protein eL42 (RPL44) from Cyberlindnera jadinii (Torula yeast).